The chain runs to 282 residues: Protein N-terminal and lysine N-methyltransferase efm7 (282 aa).

Over residues 1 to 13 (MSKPEEVVNHVPE) the composition is skewed to basic and acidic residues. The interval 1–32 (MSKPEEVVNHVPEDEGSDIEAGGLFEDPPDFY) is disordered. S-adenosyl-L-methionine contacts are provided by residues Trp67, 93–95 (GAA), Asp115, Trp152, and Ala179.

Belongs to the class I-like SAM-binding methyltransferase superfamily. EFM7 family.

The protein resides in the cytoplasm. S-adenosyl-L-methionine-dependent protein methyltransferase that trimethylates the N-terminal glycine 'Gly-2' of elongation factor 1-alpha, before also catalyzing the mono- and dimethylation of 'Lys-3'. The protein is Protein N-terminal and lysine N-methyltransferase efm7 (nnt-1) of Neurospora crassa (strain ATCC 24698 / 74-OR23-1A / CBS 708.71 / DSM 1257 / FGSC 987).